The sequence spans 391 residues: Pectate lyase B (391 aa).

The first 30 residues, 1 to 30 (MKKTVRSLCSTALALTLGFTLLSGPASVQA), serve as a signal peptide directing secretion. Ca(2+) contacts are provided by Asp181, Asp203, and Asp207. Arg305 is an active-site residue.

This sequence belongs to the polysaccharide lyase 1 family. The cofactor is Ca(2+).

The protein localises to the secreted. It carries out the reaction Eliminative cleavage of (1-&gt;4)-alpha-D-galacturonan to give oligosaccharides with 4-deoxy-alpha-D-galact-4-enuronosyl groups at their non-reducing ends.. The catalysed reaction is Eliminative cleavage of (1-&gt;4)-alpha-D-galacturonan methyl ester to give oligosaccharides with 4-deoxy-6-O-methyl-alpha-D-galact-4-enuronosyl groups at their non-reducing ends.. Its pathway is glycan metabolism; pectin degradation. Catalyzes the depolymerization of both polygalacturonate and pectins of various methyl esterification degree, with an endo mode of action. Shows the highest activity on 20 to 34% methylated pectin but retains 67%, 51%, 25%, and 1% of its maximum activity on polygalacturonate and 8.5%, 55 to 70%, and 90% methylated pectin, respectively. This Paenibacillus amylolyticus protein is Pectate lyase B.